The primary structure comprises 92 residues: Small ribosomal subunit protein uS19 (92 aa).

This sequence belongs to the universal ribosomal protein uS19 family.

In terms of biological role, protein S19 forms a complex with S13 that binds strongly to the 16S ribosomal RNA. The chain is Small ribosomal subunit protein uS19 (rpsS) from Synechocystis sp. (strain ATCC 27184 / PCC 6803 / Kazusa).